The chain runs to 146 residues: 3-dehydroquinate dehydratase (146 aa).

Tyrosine 24 serves as the catalytic Proton acceptor. 3 residues coordinate substrate: asparagine 73, histidine 79, and aspartate 86. Histidine 99 functions as the Proton donor in the catalytic mechanism. Residues 100-101 (LS) and arginine 110 each bind substrate.

This sequence belongs to the type-II 3-dehydroquinase family. Homododecamer.

The catalysed reaction is 3-dehydroquinate = 3-dehydroshikimate + H2O. It participates in metabolic intermediate biosynthesis; chorismate biosynthesis; chorismate from D-erythrose 4-phosphate and phosphoenolpyruvate: step 3/7. Catalyzes a trans-dehydration via an enolate intermediate. This is 3-dehydroquinate dehydratase from Shewanella baltica (strain OS223).